The primary structure comprises 331 residues: Mitochondrial respiration co-chaperone MRJ1 (331 aa).

A mitochondrion-targeting transit peptide spans methionine 1–aspartate 36. The tract at residues serine 35 to leucine 66 is disordered. The segment covering aspartate 40–glutamine 53 has biased composition (low complexity). Positions aspartate 83 to glycine 147 constitute a J domain. The interval aspartate 203–alanine 226 is disordered. One can recognise an IQ domain in the interval arginine 275–glutamate 303.

It belongs to the DnaJ family. Interacts with QCR2.

It is found in the mitochondrion. In terms of biological role, mitochondrial co-chaperone required for ubiquinol-cytochrome c oxidoreductase (mitochondrial respiratory chain complex III) activity. The chain is Mitochondrial respiration co-chaperone MRJ1 from Cryptococcus neoformans var. grubii serotype A (strain H99 / ATCC 208821 / CBS 10515 / FGSC 9487) (Filobasidiella neoformans var. grubii).